The primary structure comprises 172 residues: MSASIRDAGVADLPGILAIYNDAVGNTTAIWNETPVDLANRQAWFDARARQGYPILVASDAAGEVLGYASYGDWRPFEGFRGTVEHSVYVRDDQRGKGLGVQLLQALIERARAQGLHVMVAAIESGNAASIGLHRRLGFEISGQMPQVGQKFGRWLDLTFMQLNLDPTRSAP.

In terms of domain architecture, N-acetyltransferase spans 3–166 (ASIRDAGVAD…DLTFMQLNLD (164 aa)). Substrate is bound by residues 75–77 (RPF) and 85–87 (EHS). Acetyl-CoA contacts are provided by residues 88–90 (VYV), 96–101 (GKGLGV), and asparagine 127.

Homodimer.

The catalysed reaction is L-methionine sulfoximine + acetyl-CoA = N-acetyl-L-methionine sulfoximine + CoA + H(+). It catalyses the reaction L-methionine sulfone + acetyl-CoA = N-acetyl-L-methionine sulfone + CoA + H(+). In terms of biological role, plays a role in the resistance against the toxic effects of L-methionine sulfoximine (MSX), a rare amino acid, which inhibits glutamine synthetase (GlnA). Catalyzes the acetylation of L-methionine sulfoximine (MSX). It can also use L-methionine sulfone (MSO). In Pseudomonas paraeruginosa (strain DSM 24068 / PA7) (Pseudomonas aeruginosa (strain PA7)), this protein is L-methionine sulfoximine/L-methionine sulfone acetyltransferase.